The sequence spans 184 residues: Tyrosine-protein kinase receptor Tie-1 (184 aa).

Positions 1 to 164 constitute a Protein kinase domain; sequence QLLQFAADVA…RMQEARKAYV (164 aa). The active-site Proton acceptor is Asp25. Residue Tyr53 is modified to Phosphotyrosine; by autocatalysis.

It belongs to the protein kinase superfamily. Tyr protein kinase family. Tie subfamily. In terms of assembly, interacts with svep1. As to expression, expressed in most populations of endothelial cells in 24 hours embryos, including the endocardium.

It localises to the cell membrane. The enzyme catalyses L-tyrosyl-[protein] + ATP = O-phospho-L-tyrosyl-[protein] + ADP + H(+). Its function is as follows. Transmembrane tyrosine-protein kinase. Required for the formation of facial lymphatic structures and brain lymphatic endothelial cells. Also required for embryonic ventral and dorsal migration of parachordal lymphoblasts along the arterial intersegmental vessel. Plays a role in the embryonic formation of the dorsal longitudinal anastomotic vessel. The polypeptide is Tyrosine-protein kinase receptor Tie-1 (tie1) (Danio rerio (Zebrafish)).